Consider the following 572-residue polypeptide: Linalool synthase TPS2, chloroplastic (572 aa).

A chloroplast-targeting transit peptide spans Glu1 to Thr27. The interval Glu1–Lys45 is disordered. Residues Lys8–Ala28 are compositionally biased toward low complexity. The (2E)-geranyl diphosphate site is built by Arg284, Asp321, Asp325, Arg462, and Asn465. 2 residues coordinate Mg(2+): Asp321 and Asp325. Positions Asp321–Asp325 match the DDXXD motif motif. Positions 465, 469, and 473 each coordinate Mg(2+).

Belongs to the terpene synthase family. Tpsb subfamily. In terms of assembly, monomer. Mg(2+) serves as cofactor. It depends on Mn(2+) as a cofactor. As to expression, expressed in flowers and fruits.

It localises to the plastid. It is found in the chloroplast. The enzyme catalyses (2E)-geranyl diphosphate = beta-myrcene + diphosphate. The catalysed reaction is (2E)-geranyl diphosphate + H2O = linalool + diphosphate. It catalyses the reaction (2E)-geranyl diphosphate = (Z)-beta-ocimene + diphosphate. It carries out the reaction (2E)-geranyl diphosphate = (E)-beta-ocimene + diphosphate. The protein operates within secondary metabolite biosynthesis; terpenoid biosynthesis. Its function is as follows. Monoterpene synthase (mono-TPS) involved in the biosynthesis of monoterpenes natural products, constituent of coffee beverage aroma. Catalyzes the conversion of (2E)-geranyl diphosphate (GPP) into linalool and beta-myrcene, and, as minor products, cis-ocimene and trans-ocimene. Not able to use geranylgeranyl pyrophosphate (GGPP) and farnesyl pyrophosphate (FPP) as substrates. This is Linalool synthase TPS2, chloroplastic from Coffea arabica (Arabian coffee).